Consider the following 415-residue polypeptide: Phosphoglycerate kinase (415 aa).

The (2R)-3-phosphoglycerate site is built by valine 22, aspartate 23, phenylalanine 24, asparagine 25, glutamine 37, arginine 38, serine 61, histidine 62, glycine 64, arginine 65, arginine 121, histidine 168, and arginine 169. Glycine 212 contributes to the ADP binding site. Glycine 212 serves as a coordination point for CDP. AMP-binding residues include alanine 213 and lysine 214. Alanine 213 is a binding site for ATP. Alanine 213 provides a ligand contact to Mg(2+). Alanine 216 and aspartate 217 together coordinate Mg(2+). Aspartate 217 lines the CDP pocket. AMP is bound at residue lysine 218. Residue lysine 218 coordinates ATP. Residue glycine 236 coordinates ADP. Residue glycine 236 coordinates CDP. AMP-binding residues include glycine 237 and glycine 311. 2 residues coordinate ATP: glycine 237 and glycine 311. Residues glycine 336 and phenylalanine 341 each coordinate CDP. Phenylalanine 341 provides a ligand contact to ADP. Glutamate 342 serves as a coordination point for AMP. Residues glutamate 342, aspartate 373, and threonine 374 each contribute to the ATP site. Residue aspartate 373 participates in Mg(2+) binding.

This sequence belongs to the phosphoglycerate kinase family. Monomer. The cofactor is Mg(2+).

It is found in the cytoplasm. The catalysed reaction is (2R)-3-phosphoglycerate + ATP = (2R)-3-phospho-glyceroyl phosphate + ADP. Its pathway is carbohydrate degradation; glycolysis; pyruvate from D-glyceraldehyde 3-phosphate: step 2/5. In terms of biological role, enzyme of the glycolytic pathway. Glycolysis is essential in glial cells but not in neurons; neurons rely on the citric acid cycle for their energy needs, and on lactate and alanine secreted into the hemolymph by glial cells to fuel it. The chain is Phosphoglycerate kinase from Drosophila melanogaster (Fruit fly).